Consider the following 121-residue polypeptide: Large ribosomal subunit protein uL14 (121 aa).

Belongs to the universal ribosomal protein uL14 family. Part of the 50S ribosomal subunit. Forms a cluster with proteins L3 and L19. In the 70S ribosome, L14 and L19 interact and together make contacts with the 16S rRNA in bridges B5 and B8.

Binds to 23S rRNA. Forms part of two intersubunit bridges in the 70S ribosome. This is Large ribosomal subunit protein uL14 from Prochlorococcus marinus (strain MIT 9211).